We begin with the raw amino-acid sequence, 146 residues long: Hemoglobin subunit beta (146 aa).

Val1 is modified (N-acetylvaline). The Globin domain occupies 2 to 146 (HLTDAEKNLV…VANALAHKYH (145 aa)). His63 lines the heme b pocket. N6-acetyllysine is present on Lys82. A heme b-binding site is contributed by His92. Cys93 bears the S-nitrosocysteine mark. Position 144 is an N6-acetyllysine (Lys144).

This sequence belongs to the globin family. Heterotetramer of two alpha chains and two beta chains. As to expression, red blood cells.

Functionally, involved in oxygen transport from the lung to the various peripheral tissues. The polypeptide is Hemoglobin subunit beta (HBB) (Mesocricetus brandti (Brandt's hamster)).